We begin with the raw amino-acid sequence, 249 residues long: Uridylate kinase (249 aa).

19–22 contacts ATP; the sequence is KLSG. A UMP-binding site is contributed by Gly61. ATP contacts are provided by Gly62 and Arg66. UMP is bound by residues Asp81 and 142–149; that span reads TGNPYFTT. ATP is bound by residues Thr169, Tyr175, and Asp178.

It belongs to the UMP kinase family. Homohexamer.

It localises to the cytoplasm. The enzyme catalyses UMP + ATP = UDP + ADP. It participates in pyrimidine metabolism; CTP biosynthesis via de novo pathway; UDP from UMP (UMPK route): step 1/1. Its activity is regulated as follows. Inhibited by UTP. In terms of biological role, catalyzes the reversible phosphorylation of UMP to UDP. The polypeptide is Uridylate kinase (Anaeromyxobacter sp. (strain Fw109-5)).